The chain runs to 146 residues: Transcriptional repressor NrdR (146 aa).

A zinc finger spans residues 3–34 (CPFCQNPDTKVIDTRISDDGHSIRRRRVCPKC). Residues 46–136 (LLVTKRSGGV…VYQNFAGLED (91 aa)) enclose the ATP-cone domain.

It belongs to the NrdR family. Requires Zn(2+) as cofactor.

Its function is as follows. Negatively regulates transcription of bacterial ribonucleotide reductase nrd genes and operons by binding to NrdR-boxes. This is Transcriptional repressor NrdR from Bifidobacterium longum (strain NCC 2705).